A 505-amino-acid chain; its full sequence is Glycerol kinase 1 (505 aa).

ADP is bound at residue threonine 13. Threonine 13, threonine 14, and serine 15 together coordinate ATP. Threonine 13 serves as a coordination point for sn-glycerol 3-phosphate. Residue arginine 17 participates in ADP binding. Sn-glycerol 3-phosphate is bound by residues arginine 83, glutamate 84, and tyrosine 135. Glycerol contacts are provided by arginine 83, glutamate 84, and tyrosine 135. Position 231 is a phosphohistidine; by HPr (histidine 231). Aspartate 245 contacts sn-glycerol 3-phosphate. Glycerol is bound by residues aspartate 245 and glutamine 246. ADP-binding residues include threonine 267 and glycine 310. ATP contacts are provided by threonine 267, glycine 310, glutamine 314, and glycine 411. Residues glycine 411 and asparagine 415 each contribute to the ADP site.

Belongs to the FGGY kinase family. In terms of assembly, homotetramer and homodimer (in equilibrium). Post-translationally, the phosphoenolpyruvate-dependent sugar phosphotransferase system (PTS), including enzyme I, and histidine-containing protein (HPr) are required for the phosphorylation, which leads to the activation of the enzyme.

It carries out the reaction glycerol + ATP = sn-glycerol 3-phosphate + ADP + H(+). It participates in polyol metabolism; glycerol degradation via glycerol kinase pathway; sn-glycerol 3-phosphate from glycerol: step 1/1. With respect to regulation, activated by phosphorylation and inhibited by fructose 1,6-bisphosphate (FBP). Its function is as follows. Key enzyme in the regulation of glycerol uptake and metabolism. Catalyzes the phosphorylation of glycerol to yield sn-glycerol 3-phosphate. This Lactiplantibacillus plantarum (strain ATCC BAA-793 / NCIMB 8826 / WCFS1) (Lactobacillus plantarum) protein is Glycerol kinase 1.